Consider the following 216-residue polypeptide: Probable transaldolase (216 aa).

Catalysis depends on K84, which acts as the Schiff-base intermediate with substrate.

It belongs to the transaldolase family. Type 3B subfamily.

Its subcellular location is the cytoplasm. It carries out the reaction D-sedoheptulose 7-phosphate + D-glyceraldehyde 3-phosphate = D-erythrose 4-phosphate + beta-D-fructose 6-phosphate. Its pathway is carbohydrate degradation; pentose phosphate pathway; D-glyceraldehyde 3-phosphate and beta-D-fructose 6-phosphate from D-ribose 5-phosphate and D-xylulose 5-phosphate (non-oxidative stage): step 2/3. Transaldolase is important for the balance of metabolites in the pentose-phosphate pathway. The protein is Probable transaldolase of Lysinibacillus sphaericus (strain C3-41).